We begin with the raw amino-acid sequence, 252 residues long: uncharacterized protein (252 aa).

The signal sequence occupies residues 1-22 (MIHSKRLRLWLYLVLLAVFISA). A lipid anchor (N-palmitoyl cysteine) is attached at Cys-23. Cys-23 carries S-diacylglycerol cysteine lipidation.

It belongs to the staphylococcal tandem lipoprotein family.

Its subcellular location is the cell membrane. This is an uncharacterized protein from Staphylococcus aureus (strain MW2).